The following is a 342-amino-acid chain: N-acetyl-gamma-glutamyl-phosphate reductase (342 aa).

Cys149 is a catalytic residue.

This sequence belongs to the NAGSA dehydrogenase family. Type 1 subfamily.

It is found in the cytoplasm. It carries out the reaction N-acetyl-L-glutamate 5-semialdehyde + phosphate + NADP(+) = N-acetyl-L-glutamyl 5-phosphate + NADPH + H(+). The protein operates within amino-acid biosynthesis; L-arginine biosynthesis; N(2)-acetyl-L-ornithine from L-glutamate: step 3/4. In terms of biological role, catalyzes the NADPH-dependent reduction of N-acetyl-5-glutamyl phosphate to yield N-acetyl-L-glutamate 5-semialdehyde. This chain is N-acetyl-gamma-glutamyl-phosphate reductase, found in Cereibacter sphaeroides (strain ATCC 17023 / DSM 158 / JCM 6121 / CCUG 31486 / LMG 2827 / NBRC 12203 / NCIMB 8253 / ATH 2.4.1.) (Rhodobacter sphaeroides).